The following is a 378-amino-acid chain: Anhydro-N-acetylmuramic acid kinase 2 (378 aa).

14–22 (GTVLDGNID) serves as a coordination point for ATP.

This sequence belongs to the anhydro-N-acetylmuramic acid kinase family.

It carries out the reaction 1,6-anhydro-N-acetyl-beta-muramate + ATP + H2O = N-acetyl-D-muramate 6-phosphate + ADP + H(+). The protein operates within amino-sugar metabolism; 1,6-anhydro-N-acetylmuramate degradation. Its pathway is cell wall biogenesis; peptidoglycan recycling. Functionally, catalyzes the specific phosphorylation of 1,6-anhydro-N-acetylmuramic acid (anhMurNAc) with the simultaneous cleavage of the 1,6-anhydro ring, generating MurNAc-6-P. Is required for the utilization of anhMurNAc either imported from the medium or derived from its own cell wall murein, and thus plays a role in cell wall recycling. The sequence is that of Anhydro-N-acetylmuramic acid kinase 2 from Jannaschia sp. (strain CCS1).